Here is a 168-residue protein sequence, read N- to C-terminus: ATP synthase F(1) complex subunit delta, mitochondrial (168 aa).

A mitochondrion-targeting transit peptide spans 1 to 22 (MLPASLLRHPGLRRLMLQARTY). An N6-acetyllysine; alternate mark is found at Lys136 and Lys165. Lys136 and Lys165 each carry N6-succinyllysine; alternate.

It belongs to the ATPase epsilon chain family. In terms of assembly, component of the ATP synthase complex composed at least of ATP5F1A/subunit alpha, ATP5F1B/subunit beta, ATP5MC1/subunit c (homooctomer), MT-ATP6/subunit a, MT-ATP8/subunit 8, ATP5ME/subunit e, ATP5MF/subunit f, ATP5MG/subunit g, ATP5MK/subunit k, ATP5MJ/subunit j, ATP5F1C/subunit gamma, ATP5F1D/subunit delta, ATP5F1E/subunit epsilon, ATP5PF/subunit F6, ATP5PB/subunit b, ATP5PD/subunit d, ATP5PO/subunit OSCP. ATP synthase complex consists of a soluble F(1) head domain (subunits alpha(3) and beta(3)) - the catalytic core - and a membrane F(0) domain - the membrane proton channel (subunits c, a, 8, e, f, g, k and j). These two domains are linked by a central stalk (subunits gamma, delta, and epsilon) rotating inside the F1 region and a stationary peripheral stalk (subunits F6, b, d, and OSCP). Component of a complex composed at least by ATPIF1, ATP5F1A, ATP5F1B, ATP5F1C AND ATP5F1E.

The protein localises to the mitochondrion. It is found in the mitochondrion inner membrane. In terms of biological role, subunit delta, of the mitochondrial membrane ATP synthase complex (F(1)F(0) ATP synthase or Complex V) that produces ATP from ADP in the presence of a proton gradient across the membrane which is generated by electron transport complexes of the respiratory chain. ATP synthase complex consist of a soluble F(1) head domain - the catalytic core - and a membrane F(1) domain - the membrane proton channel. These two domains are linked by a central stalk rotating inside the F(1) region and a stationary peripheral stalk. During catalysis, ATP synthesis in the catalytic domain of F(1) is coupled via a rotary mechanism of the central stalk subunits to proton translocation. In vivo, can only synthesize ATP although its ATP hydrolase activity can be activated artificially in vitro. With the central stalk subunit gamma, is essential for the biogenesis of F(1) catalytic part of the ATP synthase complex namely in the formation of F1 assembly intermediate. The chain is ATP synthase F(1) complex subunit delta, mitochondrial from Mus musculus (Mouse).